A 139-amino-acid polypeptide reads, in one-letter code: D-ribose pyranase (139 aa).

The active-site Proton donor is the His-20. Residues Asp-28, His-106, and 128–130 (YAN) contribute to the substrate site.

Belongs to the RbsD / FucU family. RbsD subfamily. Homodecamer.

The protein resides in the cytoplasm. It catalyses the reaction beta-D-ribopyranose = beta-D-ribofuranose. The protein operates within carbohydrate metabolism; D-ribose degradation; D-ribose 5-phosphate from beta-D-ribopyranose: step 1/2. Its function is as follows. Catalyzes the interconversion of beta-pyran and beta-furan forms of D-ribose. The chain is D-ribose pyranase from Escherichia coli O139:H28 (strain E24377A / ETEC).